The sequence spans 322 residues: Ferredoxin--NADP reductase (322 aa).

FAD contacts are provided by Asp33, Gln41, Tyr46, Ala86, Phe120, Asp278, and Ser319.

This sequence belongs to the ferredoxin--NADP reductase type 2 family. In terms of assembly, homodimer. It depends on FAD as a cofactor.

It catalyses the reaction 2 reduced [2Fe-2S]-[ferredoxin] + NADP(+) + H(+) = 2 oxidized [2Fe-2S]-[ferredoxin] + NADPH. The protein is Ferredoxin--NADP reductase of Salinispora tropica (strain ATCC BAA-916 / DSM 44818 / JCM 13857 / NBRC 105044 / CNB-440).